The sequence spans 515 residues: Glucose-6-phosphate 1-dehydrogenase (515 aa).

Ala-2 bears the N-acetylalanine mark. Phosphoserine is present on Ser-8. A Phosphothreonine modification is found at Thr-10. NADP(+) is bound by residues Gly-38–Lys-45 and Arg-72. Lys-89 is modified (N6-acetyllysine). NADP(+)-binding residues include Tyr-147 and Lys-171. Residues Lys-171, His-201–Lys-205, Glu-239, and Asp-258 contribute to the D-glucose 6-phosphate site. Position 171 is an N6-(2-hydroxyisobutyryl)lysine; alternate (Lys-171). At Lys-171 the chain carries N6-acetyllysine; alternate. His-263 functions as the Proton acceptor in the catalytic mechanism. Residue Arg-357 coordinates NADP(+). Positions 360 and 365 each coordinate D-glucose 6-phosphate. NADP(+) is bound by residues Lys-366, Arg-370, and Arg-393. Residue Gln-395 coordinates D-glucose 6-phosphate. Residues Tyr-401 to Lys-403 and Asp-421 to Thr-423 each bind NADP(+). N6-acetyllysine is present on Lys-403. Lys-432 carries the post-translational modification N6-acetyllysine. Arg-487 contacts NADP(+). Lys-497 carries the post-translational modification N6-acetyllysine. Residues Tyr-503 and Trp-509 each coordinate NADP(+). Position 503 is a phosphotyrosine (Tyr-503).

It belongs to the glucose-6-phosphate dehydrogenase family. As to quaternary structure, homotetramer; dimer of dimers. Interacts with SIRT2; the interaction is enhanced by H(2)O(2) treatment. Forms a ternary complex with ALDOB and TP53; this interaction is direct. ALDOB stabilizes the complex inhibiting G6PD activity and keeping oxidative pentose phosphate metabolism in check. Post-translationally, acetylated by ELP3 at Lys-403; acetylation inhibits its homodimerization and enzyme activity. Deacetylated by SIRT2 at Lys-403; deacetylation stimulates its enzyme activity.

The protein resides in the cytoplasm. It is found in the cytosol. Its subcellular location is the membrane. The catalysed reaction is D-glucose 6-phosphate + NADP(+) = 6-phospho-D-glucono-1,5-lactone + NADPH + H(+). It functions in the pathway carbohydrate degradation; pentose phosphate pathway; D-ribulose 5-phosphate from D-glucose 6-phosphate (oxidative stage): step 1/3. Cytosolic glucose-6-phosphate dehydrogenase that catalyzes the first and rate-limiting step of the oxidative branch within the pentose phosphate pathway/shunt, an alternative route to glycolysis for the dissimilation of carbohydrates and a major source of reducing power and metabolic intermediates for fatty acid and nucleic acid biosynthetic processes. The sequence is that of Glucose-6-phosphate 1-dehydrogenase (G6PD) from Cricetulus griseus (Chinese hamster).